We begin with the raw amino-acid sequence, 223 residues long: Translation initiation factor 6 (223 aa).

This sequence belongs to the eIF-6 family.

Binds to the 50S ribosomal subunit and prevents its association with the 30S ribosomal subunit to form the 70S initiation complex. The chain is Translation initiation factor 6 from Methanobrevibacter smithii (strain ATCC 35061 / DSM 861 / OCM 144 / PS).